A 590-amino-acid polypeptide reads, in one-letter code: Probable serine/threonine-protein phosphatase PP2A regulatory subunit (590 aa).

HEAT repeat units lie at residues 37–73 (LSTI…VLAE), 74–111 (QLGN…DKAV), 113–150 (SLRK…TSAC), 151–188 (GLFS…RAAA), 189–227 (AKLG…LLTV), 228–266 (ESAI…YMVA), 267–305 (EKLI…CAAT), 306–344 (QRLQ…QLVK), 349–387 (GVIM…LNII), 388–426 (SSLD…LAIV), 427–465 (QFMP…EAST), 466–504 (LIMK…MTCL), 505–543 (FCLN…FNAA), and 544–582 (KSLK…YFSE).

This sequence belongs to the phosphatase 2A regulatory subunit A family. Part of a complex consisting of a common heterodimeric core enzyme, composed of catalytic subunit let-92 and constant regulatory subunit paa-1, that associates with a variety of regulatory subunits which confer distinct properties to the holoenzyme. Interacts with rsa-1.

It localises to the cytoplasm. The protein resides in the cytoskeleton. Its subcellular location is the microtubule organizing center. The protein localises to the centrosome. It is found in the spindle. In terms of biological role, acts as a scaffolding protein for phosphatase let-92 and its regulatory subunits. Probably together with let-92 and regulatory subunit sur-6, regulates centriole duplication, microtubule outgrowth and mitotic spindle stability during early embryonic cell division by preventing the degradation of sas-5 and kinase zyg-1. During vulva development, may play a role with phosphatase let-92 and regulatory subunit sur-6 in the induction of vulva cell precursors by positively regulating let-60/Ras-MAP kinase signaling, probably by promoting lin-45 activation. Plays a positive role in axon guidance probably by inhibiting phosphatase let-92. In Caenorhabditis elegans, this protein is Probable serine/threonine-protein phosphatase PP2A regulatory subunit (paa-1).